The following is a 365-amino-acid chain: IgG receptor FcRn large subunit p51 (365 aa).

The N-terminal stretch at 1–23 is a signal peptide; that stretch reads MGVPRPQPWALGLLLFLLPGSLG. Positions 24 to 110 are alpha-1; that stretch reads AESHLSLLYH…AFKALGGKGP (87 aa). Residues 24 to 297 are Extracellular-facing; sequence AESHLSLLYH…VELESPAKSS (274 aa). The interval 111-200 is alpha-2; that stretch reads YTLQGLLGCE…ERGRGNLEWK (90 aa). 2 cysteine pairs are disulfide-bonded: Cys-119-Cys-182 and Cys-221-Cys-275. Asn-125 carries N-linked (GlcNAc...) asparagine glycosylation. The alpha-3 stretch occupies residues 201 to 290; sequence EPPSMRLKAR…GLAQPLRVEL (90 aa). One can recognise an Ig-like C1-type domain in the interval 202 to 289; sequence PPSMRLKARP…AGLAQPLRVE (88 aa). A connecting peptide region spans residues 291–297; the sequence is ESPAKSS. Residues 298-321 form a helical membrane-spanning segment; that stretch reads VLVVGIVIGVLLLTAAAVGGALLW. At 322–365 the chain is on the cytoplasmic side; the sequence is RRMRSGLPAPWISLRGDDTGVLLPTPGEAQDADLKDVNVIPATA. Position 334 is a phosphoserine (Ser-334).

The protein belongs to the immunoglobulin superfamily. In terms of assembly, fcRn complex consists of two subunits: p51, and p14 which is equivalent to beta-2-microglobulin. It forms an MHC class I-like heterodimer. Interacts with albumin/ALB; this interaction regulates ALB homeostasis. As to quaternary structure, (Microbial infection) Interacts with Echovirus 6, Echovirus 11 and Echovirus 30 capsid protein VP1. In terms of tissue distribution, expressed in full-term placenta, heart, lung, liver, muscle, kidney, pancreas, and both fetal and adult small intestine.

It is found in the cell membrane. The protein localises to the endosome membrane. Its function is as follows. Cell surface receptor that transfers passive humoral immunity from the mother to the newborn. Binds to the Fc region of monomeric immunoglobulin gamma and mediates its selective uptake from milk. IgG in the milk is bound at the apical surface of the intestinal epithelium. The resultant FcRn-IgG complexes are transcytosed across the intestinal epithelium and IgG is released from FcRn into blood or tissue fluids. Throughout life, contributes to effective humoral immunity by recycling IgG and extending its half-life in the circulation. Mechanistically, monomeric IgG binding to FcRn in acidic endosomes of endothelial and hematopoietic cells recycles IgG to the cell surface where it is released into the circulation. In addition of IgG, regulates homeostasis of the other most abundant circulating protein albumin/ALB. Functionally, (Microbial infection) Acts as an uncoating receptor for a panel of echoviruses including Echovirus 5, 6, 7, 9, 11, 13, 25 and 29. This is IgG receptor FcRn large subunit p51 (FCGRT) from Homo sapiens (Human).